The primary structure comprises 114 residues: Superoxide dismutase [Cu-Zn] (114 aa).

Residues His-37, His-39, and His-54 each coordinate Cu cation. Residues His-54, His-62, His-71, and Asp-74 each coordinate Zn(2+). The disordered stretch occupies residues 54-80; the sequence is HFNPGNKEHGAPTDGNRHLGDLGNIQA. A compositionally biased stretch (basic and acidic residues) spans 59 to 73; it reads NKEHGAPTDGNRHLG. His-111 serves as a coordination point for Cu cation.

The protein belongs to the Cu-Zn superoxide dismutase family. In terms of assembly, homodimer. Requires Cu cation as cofactor. Zn(2+) is required as a cofactor.

The protein localises to the cytoplasm. The catalysed reaction is 2 superoxide + 2 H(+) = H2O2 + O2. In terms of biological role, destroys radicals which are normally produced within the cells and which are toxic to biological systems. The protein is Superoxide dismutase [Cu-Zn] of Drosophila tolteca (Fruit fly).